Reading from the N-terminus, the 719-residue chain is Protein psiJ (719 aa).

The signal sequence occupies residues 1 to 21 (MVSNLLKGLILFSLFISFLNG). Topologically, residues 22–653 (DDKIFPVTIR…RCQSVAVKAG (632 aa)) are extracellular. 10 N-linked (GlcNAc...) asparagine glycosylation sites follow: Asn46, Asn59, Asn86, Asn113, Asn301, Asn372, Asn435, Asn457, Asn562, and Asn628. Residues 112 to 260 (QNQTDPRVFY…KDYCGVCEGT (149 aa)) form the PA14 domain. Residues 654 to 674 (VIGGAAIAGVVVGGAVALGLA) form a helical membrane-spanning segment. The Cytoplasmic segment spans residues 675–719 (LFGAKAGYNHWMSLKNNQMATSSVNPLYEPSPHQGTNPLWEAPPT).

The protein belongs to the prespore-cell-inducing factor family.

The protein localises to the membrane. The polypeptide is Protein psiJ (psiJ) (Dictyostelium discoideum (Social amoeba)).